The following is a 42-amino-acid chain: Histone H1B (42 aa).

An H15 domain is found at 1-42 (TYYELIKAAILALKERNGSSAQAIKKYILENNKIEFQQTFLR).

Belongs to the histone H1/H5 family.

Its subcellular location is the nucleus. The protein resides in the chromosome. In terms of biological role, histones H1 are necessary for the condensation of nucleosome chains into higher-order structures. This is Histone H1B from Olisthodiscus luteus (Marine phytoflagellate).